Here is a 145-residue protein sequence, read N- to C-terminus: Group IID secretory phospholipase A2 (145 aa).

An N-terminal signal peptide occupies residues 1-20 (MELALLCGLVVMAGVIPIQG). Cystine bridges form between Cys-46-Cys-138, Cys-48-Cys-64, Cys-63-Cys-118, Cys-69-Cys-145, Cys-70-Cys-111, Cys-79-Cys-104, and Cys-97-Cys-109. Ca(2+)-binding residues include His-47, Gly-49, and Gly-51. Residue His-67 is part of the active site. A Ca(2+)-binding site is contributed by Asp-68. N-linked (GlcNAc...) asparagine glycosylation occurs at Asn-89. Residue Asp-112 is part of the active site.

The protein belongs to the phospholipase A2 family. Requires Ca(2+) as cofactor. In terms of tissue distribution, highly expressed in pancreas and spleen and less abundantly in colon, thymus, placenta, small intestine, and prostate.

It is found in the secreted. It catalyses the reaction a 1,2-diacyl-sn-glycero-3-phosphoethanolamine + H2O = a 1-acyl-sn-glycero-3-phosphoethanolamine + a fatty acid + H(+). The enzyme catalyses 1-hexadecanoyl-2-(9Z-octadecenoyl)-sn-glycero-3-phosphoethanolamine + H2O = 1-hexadecanoyl-sn-glycero-3-phosphoethanolamine + (9Z)-octadecenoate + H(+). The catalysed reaction is 1-hexadecanoyl-2-(9Z,12Z-octadecadienoyl)-sn-glycero-3-phosphoethanolamine + H2O = 1-hexadecanoyl-sn-glycero-3-phosphoethanolamine + (9Z,12Z)-octadecadienoate + H(+). It carries out the reaction 1,2-dihexadecanoyl-sn-glycero-3-phospho-(1'-sn-glycerol) + H2O = 1-hexadecanoyl-sn-glycero-3-phospho-(1'-sn-glycerol) + hexadecanoate + H(+). It catalyses the reaction 1-hexadecanoyl-2-(9Z-octadecenoyl)-sn-glycero-3-phospho-(1'-sn-glycerol) + H2O = 1-hexadecanoyl-sn-glycero-3-phospho-(1'-sn-glycerol) + (9Z)-octadecenoate + H(+). The enzyme catalyses a 1,2-diacyl-sn-glycero-3-phosphocholine + H2O = a 1-acyl-sn-glycero-3-phosphocholine + a fatty acid + H(+). The catalysed reaction is 1,2-dihexadecanoyl-sn-glycero-3-phosphocholine + H2O = 1-hexadecanoyl-sn-glycero-3-phosphocholine + hexadecanoate + H(+). It carries out the reaction 1-hexadecanoyl-2-(9Z-octadecenoyl)-sn-glycero-3-phosphocholine + H2O = 1-hexadecanoyl-sn-glycero-3-phosphocholine + (9Z)-octadecenoate + H(+). It catalyses the reaction 1-hexadecanoyl-2-(9Z,12Z-octadecadienoyl)-sn-glycero-3-phosphocholine + H2O = (9Z,12Z)-octadecadienoate + 1-hexadecanoyl-sn-glycero-3-phosphocholine + H(+). The enzyme catalyses 1-hexadecanoyl-2-(4Z,7Z,10Z,13Z,16Z,19Z-docosahexaenoyl)-sn-glycero-3-phosphocholine + H2O = (4Z,7Z,10Z,13Z,16Z,19Z)-docosahexaenoate + 1-hexadecanoyl-sn-glycero-3-phosphocholine + H(+). Secretory calcium-dependent phospholipase A2 that primarily targets extracellular lipids, exerting anti-inflammatory and immunosuppressive functions. Hydrolyzes the ester bond of the fatty acyl group attached at sn-2 position of phospholipids (phospholipase A2 activity) with preference for phosphatidylethanolamines and phosphatidylglycerols over phosphatidylcholines. In draining lymph nodes, selectively hydrolyzes diacyl and alkenyl forms of phosphatidylethanolamines, releasing omega-3 polyunsaturated fatty acids (PUFAs) such as eicosapentaenoate and docosahexaenoate that are precursors of the anti-inflammatory lipid mediators, resolvins. During the resolution phase of acute inflammation drives docosahexaenoate-derived resolvin D1 synthesis, which suppresses dendritic cell activation and T-helper 1 immune response. May act in an autocrine and paracrine manner. Via a mechanism independent of its catalytic activity, promotes differentiation of regulatory T cells (Tregs) and participates in the maintenance of immune tolerance. May contribute to lipid remodeling of cellular membranes and generation of lipid mediators involved in pathogen clearance. Displays bactericidal activity against Gram-positive bacteria by directly hydrolyzing phospholipids of the bacterial membrane. This chain is Group IID secretory phospholipase A2 (PLA2G2D), found in Homo sapiens (Human).